The sequence spans 245 residues: Orotidine 5'-phosphate decarboxylase (245 aa).

Substrate contacts are provided by residues Asp-22, Lys-44, 71-80, Thr-131, Arg-192, Gln-201, Gly-221, and Arg-222; that span reads DLKFHDIPNT. Lys-73 (proton donor) is an active-site residue.

The protein belongs to the OMP decarboxylase family. Type 1 subfamily. Homodimer.

The catalysed reaction is orotidine 5'-phosphate + H(+) = UMP + CO2. The protein operates within pyrimidine metabolism; UMP biosynthesis via de novo pathway; UMP from orotate: step 2/2. In terms of biological role, catalyzes the decarboxylation of orotidine 5'-monophosphate (OMP) to uridine 5'-monophosphate (UMP). The sequence is that of Orotidine 5'-phosphate decarboxylase from Shigella boydii serotype 18 (strain CDC 3083-94 / BS512).